The following is a 500-amino-acid chain: Lysine--tRNA ligase (500 aa).

Positions 402 and 409 each coordinate Mg(2+).

The protein belongs to the class-II aminoacyl-tRNA synthetase family. Homodimer. It depends on Mg(2+) as a cofactor.

Its subcellular location is the cytoplasm. The enzyme catalyses tRNA(Lys) + L-lysine + ATP = L-lysyl-tRNA(Lys) + AMP + diphosphate. The protein is Lysine--tRNA ligase of Buchnera aphidicola subsp. Baizongia pistaciae (strain Bp).